The sequence spans 364 residues: BOLA class I histocompatibility antigen, alpha chain BL3-7 (364 aa).

The N-terminal stretch at 1-27 is a signal peptide; sequence MRVMRVMRPRTLLLLLSGVLVLTETLA. The segment at 28–117 is alpha-1; that stretch reads GSHSLRYFYT…LRGYYNQSET (90 aa). The Extracellular segment spans residues 28-310; sequence GSHSLRYFYT…WEPPQTSFLI (283 aa). Asn113 carries an N-linked (GlcNAc...) asparagine glycan. The segment at 118–209 is alpha-2; it reads GSHNIQAMYG…ENGKDTLLRA (92 aa). 2 disulfides stabilise this stretch: Cys128–Cys191 and Cys230–Cys286. Positions 210 to 301 are alpha-3; that stretch reads DPPKAHVTHH…GLQEPLTLRW (92 aa). The Ig-like C1-type domain occupies 212–298; that stretch reads PKAHVTHHSI…QHEGLQEPLT (87 aa). Residues 302–310 form a connecting peptide region; sequence EPPQTSFLI. The helical transmembrane segment at 311–331 threads the bilayer; sequence MGIIVGLVLLVVALVAGAVIW. Residues 332–364 are Cytoplasmic-facing; it reads RKKRSGEKGRIYTQAASSDSAQGSDVSLTVPKV. A phosphoserine mark is found at Ser355 and Ser358.

The protein belongs to the MHC class I family. Heterodimer of an alpha chain and a beta chain (beta-2-microglobulin).

The protein localises to the membrane. Involved in the presentation of foreign antigens to the immune system. The sequence is that of BOLA class I histocompatibility antigen, alpha chain BL3-7 from Bos taurus (Bovine).